Reading from the N-terminus, the 479-residue chain is Protoheme IX farnesyltransferase (479 aa).

Residues 1–207 (MAEQTATTTS…AYIRLTKPRL (207 aa)) are unknown. Helical transmembrane passes span 20-40 (LLAG…TTAV), 64-84 (IGWL…CAVV), 98-118 (VLIT…VGAV), and 128-148 (LSVI…IALA). Residues 155 to 164 (TGDPTETQTT) are compositionally biased toward low complexity. Residues 155-186 (TGDPTETQTTPSKPEPDQDLPPASEYDPDLPA) form a disordered region. 9 consecutive transmembrane segments (helical) span residues 207-227 (LMWL…TTTG), 231-251 (PGIA…SGTF), 271-291 (LATD…LTVI), 303-322 (AAIL…TLLL), 324-344 (PNTV…ALIG), 345-365 (WVAV…VIFL), 402-422 (HVIW…TIEA), 423-443 (LGIV…YFAI), and 459-479 (HASN…TLVI). The segment at 208-476 (MWLLCLVASA…AVLIAIVFDT (269 aa)) is protoheme IX prenyltransferase.

In the C-terminal section; belongs to the UbiA prenyltransferase family. Protoheme IX farnesyltransferase subfamily.

It is found in the cell membrane. The catalysed reaction is heme b + (2E,6E)-farnesyl diphosphate + H2O = Fe(II)-heme o + diphosphate. The protein operates within porphyrin-containing compound metabolism; heme O biosynthesis; heme O from protoheme: step 1/1. In terms of biological role, converts heme B (protoheme IX) to heme O by substitution of the vinyl group on carbon 2 of heme B porphyrin ring with a hydroxyethyl farnesyl side group. The chain is Protoheme IX farnesyltransferase (ctaB) from Haloquadratum walsbyi (strain DSM 16790 / HBSQ001).